The primary structure comprises 367 residues: uncharacterized protein (367 aa).

This sequence to M.tuberculosis Rv0502.

This is an uncharacterized protein from Mycobacterium leprae (strain TN).